The primary structure comprises 478 residues: Glutamate--tRNA ligase 1 (478 aa).

The 'HIGH' region signature appears at Pro-10–Gly-20. The short motif at Lys-242 to Arg-246 is the 'KMSKS' region element. An ATP-binding site is contributed by Lys-245.

Belongs to the class-I aminoacyl-tRNA synthetase family. Glutamate--tRNA ligase type 1 subfamily. As to quaternary structure, monomer.

The protein localises to the cytoplasm. It carries out the reaction tRNA(Glu) + L-glutamate + ATP = L-glutamyl-tRNA(Glu) + AMP + diphosphate. Functionally, catalyzes the attachment of glutamate to tRNA(Glu) in a two-step reaction: glutamate is first activated by ATP to form Glu-AMP and then transferred to the acceptor end of tRNA(Glu). This chain is Glutamate--tRNA ligase 1, found in Orientia tsutsugamushi (strain Boryong) (Rickettsia tsutsugamushi).